We begin with the raw amino-acid sequence, 549 residues long: Cation/acetate symporter ActP (549 aa).

A run of 13 helical transmembrane segments spans residues 33-53 (WQAIIMFLIFVVFTLGITYWA), 77-97 (LAIAGDYMSAASFLGISALVF), 103-123 (GLIYSLGFLVGWPIILFLIAE), 148-168 (ILSACGSLVVVALYLIAQMVG), 183-203 (IAVVLVGVLMMMYVLFGGMLA), 206-226 (WVQIIKAVLLLFGASFMAFMV), 262-282 (ISALSLGLGLMFGTAGLPHIL), 303-323 (GFMGYFYILTFIIGFGAIMLV), 355-375 (LFLGFISAVAFATILAVVAGL), 404-424 (VSKITVLILGVIAIILGVLFE), 428-448 (IAFMVGLAFAIAASCNFPIIL), 464-484 (GGWLGLITAVVLMILGPTIWV), and 493-513 (IFPYEYPALFSITVAFLGIWF).

Belongs to the sodium:solute symporter (SSF) (TC 2.A.21) family.

Its subcellular location is the cell inner membrane. Functionally, transports acetate. The sequence is that of Cation/acetate symporter ActP from Escherichia coli (strain ATCC 8739 / DSM 1576 / NBRC 3972 / NCIMB 8545 / WDCM 00012 / Crooks).